An 81-amino-acid chain; its full sequence is Styelin-D (81 aa).

The first 22 residues, 1–22 (MQMKATILIVLVALFMIQQSEA), serve as a signal peptide directing secretion. Trp-24 carries the post-translational modification 6'-bromotryptophan. Position 26 is a 3,4-dihydroxyarginine (Arg-26). A 4,5-dihydroxylysine mark is found at Lys-27, Lys-30, and Lys-34. 3',4'-dihydroxyphenylalanine is present on residues Tyr-36 and Tyr-37. Lys-38 carries the post-translational modification 4,5-dihydroxylysine. Lys-40 carries the post-translational modification 5-hydroxylysine. 2 positions are modified to 3',4'-dihydroxyphenylalanine: Tyr-41 and Tyr-42. Lys-44 carries the post-translational modification 5-hydroxylysine. Position 54 is a leucine amide (Leu-54). A propeptide spans 56 to 81 (DMTDEEFQDFMKEVEQAREEELQSRQ) (removed in mature form).

Post-translationally, contains L-DOPA (3',4'-dihydroxyphenylalanine). Hemocytes and pharyngeal tissues.

The protein localises to the secreted. Bactericidal against several Gram-positive and Gram-negative bacteria. Plays a significant role in the innate immune mechanisms of S.clava. In Styela clava (Sea squirt), this protein is Styelin-D.